The primary structure comprises 218 residues: MGQKINPLGFRLGATQSHRSFWFAQPKNYSDGLQEDEKIRDCIKNYVQKEMRISSGFEGIARIGIQKRIDLIQVIIYIGFPNLLIEGRTRGIEELQSNVQKEFNSGNRRLNVVITRVAKPYGQPNILAEYIAGQLKKRVSFRKAMKKAIELTEQADTKGIQVQIAGRIDGKEIARVEWIREGRVPLQTIRAKIDHCSYMVRTIYGVLGIKIWIFVDED.

Residues 47-118 enclose the KH type-2 domain; it reads VQKEMRISSG…RLNVVITRVA (72 aa).

Belongs to the universal ribosomal protein uS3 family. As to quaternary structure, part of the 30S ribosomal subunit.

It is found in the plastid. Its subcellular location is the chloroplast. The chain is Small ribosomal subunit protein uS3c (rps3) from Ceratophyllum demersum (Rigid hornwort).